Reading from the N-terminus, the 251-residue chain is Probable transcriptional regulatory protein Swol_1435 (251 aa).

The disordered stretch occupies residues 1–23 (MAGHSKWANIKHKKARSDEKRGK).

This sequence belongs to the TACO1 family.

The protein localises to the cytoplasm. This chain is Probable transcriptional regulatory protein Swol_1435, found in Syntrophomonas wolfei subsp. wolfei (strain DSM 2245B / Goettingen).